A 432-amino-acid chain; its full sequence is Peptidase B (432 aa).

Mn(2+) contacts are provided by K196 and D201. K208 is a catalytic residue. Mn(2+) contacts are provided by D219, D278, and E280. R282 is a catalytic residue.

This sequence belongs to the peptidase M17 family. As to quaternary structure, homohexamer. It depends on Mn(2+) as a cofactor.

It localises to the cytoplasm. It catalyses the reaction Release of an N-terminal amino acid, Xaa, from a peptide or arylamide. Xaa is preferably Glu or Asp but may be other amino acids, including Leu, Met, His, Cys and Gln.. In terms of biological role, probably plays an important role in intracellular peptide degradation. The protein is Peptidase B of Vibrio vulnificus (strain CMCP6).